The following is a 288-amino-acid chain: ATP synthase gamma chain (288 aa).

Belongs to the ATPase gamma chain family. F-type ATPases have 2 components, CF(1) - the catalytic core - and CF(0) - the membrane proton channel. CF(1) has five subunits: alpha(3), beta(3), gamma(1), delta(1), epsilon(1). CF(0) has three main subunits: a, b and c.

It is found in the cell inner membrane. Produces ATP from ADP in the presence of a proton gradient across the membrane. The gamma chain is believed to be important in regulating ATPase activity and the flow of protons through the CF(0) complex. The polypeptide is ATP synthase gamma chain (Trichlorobacter lovleyi (strain ATCC BAA-1151 / DSM 17278 / SZ) (Geobacter lovleyi)).